The sequence spans 726 residues: DNA ligase (726 aa).

NAD(+)-binding positions include 34 to 38 (DAEYD), 83 to 84 (SL), and glutamate 115. Lysine 117 serves as the catalytic N6-AMP-lysine intermediate. 4 residues coordinate NAD(+): arginine 138, glutamate 190, lysine 306, and lysine 330. The Zn(2+) site is built by cysteine 424, cysteine 427, cysteine 442, and cysteine 448. The BRCT domain occupies 608–698 (SRGNALAGKT…RTADDQATPA (91 aa)). Residues 690-726 (TADDQATPASDRRAATASVPPSDDAPGSPRQLDFDLT) are disordered.

Belongs to the NAD-dependent DNA ligase family. LigA subfamily. The cofactor is Mg(2+). Requires Mn(2+) as cofactor.

It catalyses the reaction NAD(+) + (deoxyribonucleotide)n-3'-hydroxyl + 5'-phospho-(deoxyribonucleotide)m = (deoxyribonucleotide)n+m + AMP + beta-nicotinamide D-nucleotide.. Functionally, DNA ligase that catalyzes the formation of phosphodiester linkages between 5'-phosphoryl and 3'-hydroxyl groups in double-stranded DNA using NAD as a coenzyme and as the energy source for the reaction. It is essential for DNA replication and repair of damaged DNA. This Roseiflexus sp. (strain RS-1) protein is DNA ligase.